A 725-amino-acid chain; its full sequence is Polyribonucleotide nucleotidyltransferase (725 aa).

Residues D488 and D494 each coordinate Mg(2+). One can recognise a KH domain in the interval 555–614 (PRMITMKIHPDKIREVIGKGGSTIQALTKETGTTIDIQEDGTITIASTSTDGMAEAKRRI). The 69-residue stretch at 624–692 (GKIYAGTVLK…EKGRLRLSLK (69 aa)) folds into the S1 motif domain. Residues 702–725 (ISPIAQGDAPAAAPAAPASPDQQQ) form a disordered region. A compositionally biased stretch (low complexity) spans 706 to 725 (AQGDAPAAAPAAPASPDQQQ).

It belongs to the polyribonucleotide nucleotidyltransferase family. Mg(2+) serves as cofactor.

It is found in the cytoplasm. It carries out the reaction RNA(n+1) + phosphate = RNA(n) + a ribonucleoside 5'-diphosphate. Involved in mRNA degradation. Catalyzes the phosphorolysis of single-stranded polyribonucleotides processively in the 3'- to 5'-direction. This is Polyribonucleotide nucleotidyltransferase from Cupriavidus metallidurans (strain ATCC 43123 / DSM 2839 / NBRC 102507 / CH34) (Ralstonia metallidurans).